The primary structure comprises 216 residues: Protein-L-isoaspartate O-methyltransferase (216 aa).

Ser62 is a catalytic residue.

The protein belongs to the methyltransferase superfamily. L-isoaspartyl/D-aspartyl protein methyltransferase family.

The protein localises to the cytoplasm. The catalysed reaction is [protein]-L-isoaspartate + S-adenosyl-L-methionine = [protein]-L-isoaspartate alpha-methyl ester + S-adenosyl-L-homocysteine. Its function is as follows. Catalyzes the methyl esterification of L-isoaspartyl residues in peptides and proteins that result from spontaneous decomposition of normal L-aspartyl and L-asparaginyl residues. It plays a role in the repair and/or degradation of damaged proteins. This Methanospirillum hungatei JF-1 (strain ATCC 27890 / DSM 864 / NBRC 100397 / JF-1) protein is Protein-L-isoaspartate O-methyltransferase.